Reading from the N-terminus, the 233-residue chain is Large ribosomal subunit protein uL1 (233 aa).

It belongs to the universal ribosomal protein uL1 family. As to quaternary structure, part of the 50S ribosomal subunit.

In terms of biological role, binds directly to 23S rRNA. The L1 stalk is quite mobile in the ribosome, and is involved in E site tRNA release. Functionally, protein L1 is also a translational repressor protein, it controls the translation of the L11 operon by binding to its mRNA. This chain is Large ribosomal subunit protein uL1, found in Brucella suis (strain ATCC 23445 / NCTC 10510).